A 328-amino-acid polypeptide reads, in one-letter code: Chlorate reductase subunit beta (328 aa).

4Fe-4S ferredoxin-type domains are found at residues 6–35 (VAYV…RDGR), 125–156 (NHSF…KRPE), and 158–187 (GIVV…FNLQ). 7 residues coordinate [4Fe-4S] cluster: C15, C18, C21, C25, C134, C137, and C142. 3 residues coordinate [3Fe-4S] cluster: C146, C167, and C173. Residues C177, C194, C197, C209, and C213 each coordinate [4Fe-4S] cluster.

Heterotrimer of alpha, beta and gamma subunits. The cofactor is [3Fe-4S] cluster. It depends on [4Fe-4S] cluster as a cofactor.

Its subcellular location is the periplasm. In terms of biological role, electron transfer subunit of the terminal reductase during anaerobic growth on chlorate. The sequence is that of Chlorate reductase subunit beta (clrB) from Ideonella dechloratans.